A 244-amino-acid polypeptide reads, in one-letter code: LexA repressor (244 aa).

The disordered stretch occupies residues Met-1 to Asp-24. Over residues Asp-10 to Asp-24 the composition is skewed to low complexity. Residues Ile-58–Arg-78 constitute a DNA-binding region (H-T-H motif). Catalysis depends on for autocatalytic cleavage activity residues Ser-168 and Lys-205.

It belongs to the peptidase S24 family. Homodimer.

The catalysed reaction is Hydrolysis of Ala-|-Gly bond in repressor LexA.. Functionally, represses a number of genes involved in the response to DNA damage (SOS response), including recA and lexA. In the presence of single-stranded DNA, RecA interacts with LexA causing an autocatalytic cleavage which disrupts the DNA-binding part of LexA, leading to derepression of the SOS regulon and eventually DNA repair. In Mycobacterium marinum (strain ATCC BAA-535 / M), this protein is LexA repressor.